Here is a 160-residue protein sequence, read N- to C-terminus: Troponin C, skeletal muscle (160 aa).

Thr-2 bears the N-acetylthreonine mark. EF-hand domains lie at 15-50, 51-86, 91-126, and 127-160; these read EMIA…LGQT, PTKE…QMKE, KSEE…SGEH, and VTDE…EGVQ. 19 residues coordinate Ca(2+): Asp-28, Asp-30, Asp-34, Glu-39, Asp-64, Asp-66, Ser-68, Thr-70, Glu-75, Asp-104, Asn-106, Asp-108, Tyr-110, Glu-115, Asp-140, Asn-142, Asp-144, Arg-146, and Glu-151.

Belongs to the troponin C family.

Its function is as follows. Troponin is the central regulatory protein of striated muscle contraction. Tn consists of three components: Tn-I which is the inhibitor of actomyosin ATPase, Tn-T which contains the binding site for tropomyosin and Tn-C. The binding of calcium to Tn-C abolishes the inhibitory action of Tn on actin filaments. This chain is Troponin C, skeletal muscle (TNNC2), found in Homo sapiens (Human).